Here is an 87-residue protein sequence, read N- to C-terminus: Sec-independent protein translocase protein TatA (87 aa).

A helical membrane pass occupies residues 3–23; it reads GTFSWTHLLIIALLFVVLFGA. Residues 47-87 are disordered; it reads MQHETPQANAAPVQQPAQQLPPAQPAQAPAQPVNQAEQKSA. Low complexity predominate over residues 52–87; that stretch reads PQANAAPVQQPAQQLPPAQPAQAPAQPVNQAEQKSA.

This sequence belongs to the TatA/E family. As to quaternary structure, the Tat system comprises two distinct complexes: a TatABC complex, containing multiple copies of TatA, TatB and TatC subunits, and a separate TatA complex, containing only TatA subunits. Substrates initially bind to the TatABC complex, which probably triggers association of the separate TatA complex to form the active translocon.

Its subcellular location is the cell membrane. Its function is as follows. Part of the twin-arginine translocation (Tat) system that transports large folded proteins containing a characteristic twin-arginine motif in their signal peptide across membranes. TatA could form the protein-conducting channel of the Tat system. The polypeptide is Sec-independent protein translocase protein TatA (Nocardia farcinica (strain IFM 10152)).